A 585-amino-acid chain; its full sequence is MDALLGTGPRRARGCLGAAGPTSSGRAARTPAAPWARFSAWLECVCVVTFDLELGQALELVYPNDFRLTDKEKSSICYLSFPDSHSGCLGDTQFSFRMRQCGGQRSPWHADDRHYNSRAPVALQREPAHYFGYVYFRQVKDSSVKRGYFQKSLVLVSRLPFVRLFQALLSLIAPEYFDKLAPCLEAVCSEIDQWPAPAPGQTLNLPVMGVVVQVRIPSRVDKSESSPPKQFDQENLLPAPVVLASVHELDLFRCFRPVLTHMQTLWELMLLGEPLLVLAPSPDVSSEMVLALTSCLQPLRFCCDFRPYFTIHDSEFKEFTTRTQAPPNVVLGVTNPFFIKTLQHWPHILRVGEPKMSGDLPKQVKLKKPSRLKTLDTKPGLYTAYTAHLHRDKALLKRLLKGVQKKRPSDVQSALLRRHLLELTQSFIIPLEHYMASLMPLQKSITPWKTPPQIQPFSQDDFLRSLEHAGPQLTCILKGDWLGLYRRFFKSPHFDGWYRQRHKEMALKLEALHLEAICEANIETWMKDKSEVEVVDLVLKLREKLVRAQGHQLPVKEATLQRAQLYIETVIGSLPKDLQAVLCPP.

A uDENN domain is found at glutamate 43 to valine 214. In terms of domain architecture, cDENN spans valine 246 to lysine 373. The 125-residue stretch at leucine 375–arginine 499 folds into the dDENN domain.

It belongs to the DENND6 family.

The protein resides in the recycling endosome. Its subcellular location is the cytoplasm. In terms of biological role, guanine nucleotide exchange factor (GEF) for RAB14. Also has some, lesser GEF activity towards RAB35. In Homo sapiens (Human), this protein is Protein DENND6B (DENND6B).